We begin with the raw amino-acid sequence, 150 residues long: Large ribosomal subunit protein uL15 (150 aa).

The tract at residues 1–60 (MKLSDLRPNPGANKRRKRVGRGPGSGHGKTATRGHKGQKSRSGGLKDPRRFEGGRSTTLM) is disordered. Positions 30-39 (TATRGHKGQK) are enriched in basic residues. Basic and acidic residues predominate over residues 44-53 (GLKDPRRFEG).

This sequence belongs to the universal ribosomal protein uL15 family. Part of the 50S ribosomal subunit.

In terms of biological role, binds to the 23S rRNA. The sequence is that of Large ribosomal subunit protein uL15 from Thermus thermophilus (strain ATCC BAA-163 / DSM 7039 / HB27).